We begin with the raw amino-acid sequence, 522 residues long: Putative aldehyde dehydrogenase-like protein C21C3 (522 aa).

Residue Glu-239 is the Proton acceptor of the active site. Catalysis depends on Cys-273, which acts as the Nucleophile.

Belongs to the aldehyde dehydrogenase family.

The protein localises to the cytoplasm. It localises to the nucleus. The polypeptide is Putative aldehyde dehydrogenase-like protein C21C3 (Schizosaccharomyces pombe (strain 972 / ATCC 24843) (Fission yeast)).